The primary structure comprises 461 residues: Siroheme synthase (461 aa).

Residues 1 to 204 (MRYLPLFVYL…GNFRKANRVI (204 aa)) form a precorrin-2 dehydrogenase /sirohydrochlorin ferrochelatase region. NAD(+) is bound by residues 22 to 23 (IV) and 43 to 44 (KT). At Ser128 the chain carries Phosphoserine. A uroporphyrinogen-III C-methyltransferase region spans residues 218–461 (GSVSLVGAGP…HNEISWFGNG (244 aa)). S-adenosyl-L-methionine is bound at residue Pro227. Asp250 functions as the Proton acceptor in the catalytic mechanism. Lys272 functions as the Proton donor in the catalytic mechanism. Residues 303–305 (GGD), Ile308, Met386, and Gly415 contribute to the S-adenosyl-L-methionine site.

In the N-terminal section; belongs to the precorrin-2 dehydrogenase / sirohydrochlorin ferrochelatase family. It in the C-terminal section; belongs to the precorrin methyltransferase family.

The catalysed reaction is uroporphyrinogen III + 2 S-adenosyl-L-methionine = precorrin-2 + 2 S-adenosyl-L-homocysteine + H(+). It catalyses the reaction precorrin-2 + NAD(+) = sirohydrochlorin + NADH + 2 H(+). It carries out the reaction siroheme + 2 H(+) = sirohydrochlorin + Fe(2+). Its pathway is cofactor biosynthesis; adenosylcobalamin biosynthesis; precorrin-2 from uroporphyrinogen III: step 1/1. The protein operates within cofactor biosynthesis; adenosylcobalamin biosynthesis; sirohydrochlorin from precorrin-2: step 1/1. It participates in porphyrin-containing compound metabolism; siroheme biosynthesis; precorrin-2 from uroporphyrinogen III: step 1/1. It functions in the pathway porphyrin-containing compound metabolism; siroheme biosynthesis; siroheme from sirohydrochlorin: step 1/1. Its pathway is porphyrin-containing compound metabolism; siroheme biosynthesis; sirohydrochlorin from precorrin-2: step 1/1. In terms of biological role, multifunctional enzyme that catalyzes the SAM-dependent methylations of uroporphyrinogen III at position C-2 and C-7 to form precorrin-2 via precorrin-1. Then it catalyzes the NAD-dependent ring dehydrogenation of precorrin-2 to yield sirohydrochlorin. Finally, it catalyzes the ferrochelation of sirohydrochlorin to yield siroheme. The sequence is that of Siroheme synthase from Blochmanniella floridana.